The sequence spans 476 residues: Aspartyl/glutamyl-tRNA(Asn/Gln) amidotransferase subunit B (476 aa).

It belongs to the GatB/GatE family. GatB subfamily. In terms of assembly, heterotrimer of A, B and C subunits.

It catalyses the reaction L-glutamyl-tRNA(Gln) + L-glutamine + ATP + H2O = L-glutaminyl-tRNA(Gln) + L-glutamate + ADP + phosphate + H(+). The catalysed reaction is L-aspartyl-tRNA(Asn) + L-glutamine + ATP + H2O = L-asparaginyl-tRNA(Asn) + L-glutamate + ADP + phosphate + 2 H(+). Allows the formation of correctly charged Asn-tRNA(Asn) or Gln-tRNA(Gln) through the transamidation of misacylated Asp-tRNA(Asn) or Glu-tRNA(Gln) in organisms which lack either or both of asparaginyl-tRNA or glutaminyl-tRNA synthetases. The reaction takes place in the presence of glutamine and ATP through an activated phospho-Asp-tRNA(Asn) or phospho-Glu-tRNA(Gln). In Neisseria meningitidis serogroup C (strain 053442), this protein is Aspartyl/glutamyl-tRNA(Asn/Gln) amidotransferase subunit B.